We begin with the raw amino-acid sequence, 67 residues long: Penaeidin-4a (67 aa).

The first 19 residues, 1-19 (MRLVVCLVFLASFALVCQG), serve as a signal peptide directing secretion. Disulfide bonds link Cys-42–Cys-56, Cys-45–Cys-63, and Cys-57–Cys-64. Arg-66 is modified (arginine amide).

Belongs to the penaeidin family.

The protein localises to the cytoplasmic granule. Its function is as follows. Antibacterial and antifungal activity. Presents chitin-binding activity. The sequence is that of Penaeidin-4a from Penaeus vannamei (Whiteleg shrimp).